Consider the following 225-residue polypeptide: Probable 3-keto-L-gulonate-6-phosphate decarboxylase (225 aa).

Asp11 contributes to the substrate binding site. 2 residues coordinate Mg(2+): Glu33 and Asp62. Arg202 provides a ligand contact to substrate.

Belongs to the HPS/KGPDC family. KGPDC subfamily. In terms of assembly, homodimer. Mg(2+) serves as cofactor.

The enzyme catalyses 3-dehydro-L-gulonate 6-phosphate + H(+) = L-xylulose 5-phosphate + CO2. Its function is as follows. Catalyzes the decarboxylation of 3-keto-L-gulonate-6-P into L-xylulose-5-P. The chain is Probable 3-keto-L-gulonate-6-phosphate decarboxylase (sgbH) from Haemophilus influenzae (strain ATCC 51907 / DSM 11121 / KW20 / Rd).